The following is an 80-amino-acid chain: Acyl carrier protein (80 aa).

One can recognise a Carrier domain in the interval 4 to 79 (DEIFSKVRSI…DVVNFIKKRK (76 aa)). Serine 39 carries the post-translational modification O-(pantetheine 4'-phosphoryl)serine.

It belongs to the acyl carrier protein (ACP) family. Post-translationally, 4'-phosphopantetheine is transferred from CoA to a specific serine of apo-ACP by AcpS. This modification is essential for activity because fatty acids are bound in thioester linkage to the sulfhydryl of the prosthetic group.

The protein resides in the cytoplasm. It participates in lipid metabolism; fatty acid biosynthesis. Carrier of the growing fatty acid chain in fatty acid biosynthesis. The chain is Acyl carrier protein from Borrelia garinii subsp. bavariensis (strain ATCC BAA-2496 / DSM 23469 / PBi) (Borreliella bavariensis).